The following is a 157-amino-acid chain: RNA-binding protein 3 (157 aa).

Residues 6 to 84 form the RRM domain; the sequence is GKLFVGGLNF…RQIRVDHAGK (79 aa). At arginine 47 the chain carries Omega-N-methylarginine. The tract at residues 81–157 is disordered; that stretch reads HAGKSARGTR…GGNYRDNYDN (77 aa). Arginine 105 carries the post-translational modification Asymmetric dimethylarginine; alternate. Residue arginine 105 is modified to Dimethylated arginine; in A2780 ovarian carcinoma cell line. Position 105 is an omega-N-methylarginine; alternate (arginine 105). Over residues 105 to 114 the composition is skewed to gly residues; sequence RGGGDQGYGS. Arginine 121 and arginine 131 each carry omega-N-methylarginine. A Phosphoserine modification is found at serine 147. Tyrosine 155 carries the post-translational modification Phosphotyrosine.

As to quaternary structure, interacts with RPL4. Associates with the 60S ribosomal subunits in an RNA-independent manner. Associates with ribosomes. Arg-105 is dimethylated, probably to asymmetric dimethylarginine. In terms of processing, phosphorylated.

The protein resides in the nucleus. It is found in the cytoplasm. It localises to the cell projection. The protein localises to the dendrite. Functionally, cold-inducible mRNA binding protein that enhances global protein synthesis at both physiological and mild hypothermic temperatures. Reduces the relative abundance of microRNAs, when overexpressed. Enhances phosphorylation of translation initiation factors and active polysome formation. The sequence is that of RNA-binding protein 3 (RBM3) from Homo sapiens (Human).